The chain runs to 390 residues: Argininosuccinate synthase (390 aa).

Residue 6-14 participates in ATP binding; sequence SYSGGLDTT. An L-citrulline-binding site is contributed by Tyr-83. Gly-113 contacts ATP. Residues Thr-115, Asn-119, and Asp-120 each contribute to the L-aspartate site. Asn-119 is an L-citrulline binding site. L-citrulline is bound by residues Arg-123, Ser-169, Ser-178, Glu-254, and Tyr-266.

This sequence belongs to the argininosuccinate synthase family. Type 1 subfamily. Homotetramer.

It is found in the cytoplasm. It carries out the reaction L-citrulline + L-aspartate + ATP = 2-(N(omega)-L-arginino)succinate + AMP + diphosphate + H(+). Its pathway is amino-acid biosynthesis; L-arginine biosynthesis; L-arginine from L-ornithine and carbamoyl phosphate: step 2/3. This Archaeoglobus fulgidus (strain ATCC 49558 / DSM 4304 / JCM 9628 / NBRC 100126 / VC-16) protein is Argininosuccinate synthase.